We begin with the raw amino-acid sequence, 257 residues long: Triosephosphate isomerase, cytosolic (257 aa).

Substrate-binding residues include N10 and K12. H96 acts as the Electrophile in catalysis. Catalysis depends on E167, which acts as the Proton acceptor.

It belongs to the triosephosphate isomerase family. In terms of assembly, homodimer. As to expression, higher levels found in leaves than in roots.

The protein resides in the cytoplasm. The enzyme catalyses D-glyceraldehyde 3-phosphate = dihydroxyacetone phosphate. It participates in carbohydrate biosynthesis; gluconeogenesis. Its pathway is carbohydrate degradation; glycolysis; D-glyceraldehyde 3-phosphate from glycerone phosphate: step 1/1. The sequence is that of Triosephosphate isomerase, cytosolic (TPI) from Stellaria longipes (Longstalk starwort).